Reading from the N-terminus, the 311-residue chain is Lipoyl synthase (311 aa).

Residues Cys-47, Cys-52, Cys-58, Cys-73, Cys-77, Cys-80, and Ser-286 each contribute to the [4Fe-4S] cluster site. The 218-residue stretch at 59-276 (WSRHTATYLA…RSVGESLGLF (218 aa)) folds into the Radical SAM core domain.

This sequence belongs to the radical SAM superfamily. Lipoyl synthase family. [4Fe-4S] cluster is required as a cofactor.

Its subcellular location is the cytoplasm. The catalysed reaction is [[Fe-S] cluster scaffold protein carrying a second [4Fe-4S](2+) cluster] + N(6)-octanoyl-L-lysyl-[protein] + 2 oxidized [2Fe-2S]-[ferredoxin] + 2 S-adenosyl-L-methionine + 4 H(+) = [[Fe-S] cluster scaffold protein] + N(6)-[(R)-dihydrolipoyl]-L-lysyl-[protein] + 4 Fe(3+) + 2 hydrogen sulfide + 2 5'-deoxyadenosine + 2 L-methionine + 2 reduced [2Fe-2S]-[ferredoxin]. Its pathway is protein modification; protein lipoylation via endogenous pathway; protein N(6)-(lipoyl)lysine from octanoyl-[acyl-carrier-protein]: step 2/2. Functionally, catalyzes the radical-mediated insertion of two sulfur atoms into the C-6 and C-8 positions of the octanoyl moiety bound to the lipoyl domains of lipoate-dependent enzymes, thereby converting the octanoylated domains into lipoylated derivatives. This Chlamydia trachomatis serovar D (strain ATCC VR-885 / DSM 19411 / UW-3/Cx) protein is Lipoyl synthase.